Here is a 297-residue protein sequence, read N- to C-terminus: tRNA uridine(34) hydroxylase (297 aa).

The Rhodanese domain maps to 133-228; that stretch reads RGEEVVFFDG…YGETFKDQGL (96 aa). The active-site Cysteine persulfide intermediate is Cys-188.

Belongs to the TrhO family.

The enzyme catalyses uridine(34) in tRNA + AH2 + O2 = 5-hydroxyuridine(34) in tRNA + A + H2O. Catalyzes oxygen-dependent 5-hydroxyuridine (ho5U) modification at position 34 in tRNAs. The polypeptide is tRNA uridine(34) hydroxylase (Arthrobacter sp. (strain FB24)).